A 138-amino-acid chain; its full sequence is ATP synthase epsilon chain (138 aa).

This sequence belongs to the ATPase epsilon chain family. F-type ATPases have 2 components, CF(1) - the catalytic core - and CF(0) - the membrane proton channel. CF(1) has five subunits: alpha(3), beta(3), gamma(1), delta(1), epsilon(1). CF(0) has three main subunits: a, b and c.

It is found in the cell inner membrane. Its function is as follows. Produces ATP from ADP in the presence of a proton gradient across the membrane. The chain is ATP synthase epsilon chain from Methylibium petroleiphilum (strain ATCC BAA-1232 / LMG 22953 / PM1).